A 429-amino-acid chain; its full sequence is C4-dicarboxylate transport protein (429 aa).

A run of 8 helical transmembrane segments spans residues valine 9–proline 29, leucine 45–methionine 65, leucine 79–isoleucine 99, glycine 149–glycine 169, valine 185–methionine 205, leucine 223–alanine 243, isoleucine 308–methionine 328, and alanine 356–isoleucine 376.

Belongs to the dicarboxylate/amino acid:cation symporter (DAACS) (TC 2.A.23) family.

The protein localises to the cell inner membrane. Functionally, responsible for the transport of dicarboxylates such as succinate, fumarate, and malate from the periplasm across the membrane. This Burkholderia multivorans (strain ATCC 17616 / 249) protein is C4-dicarboxylate transport protein.